Here is a 3003-residue protein sequence, read N- to C-terminus: MAX gene-associated protein (3003 aa).

Residues Lys-4 and Lys-178 each participate in a glycyl lysine isopeptide (Lys-Gly) (interchain with G-Cter in SUMO2) cross-link. The T-box DNA-binding region spans 84-260; the sequence is MWNEFHNRST…YNPFAKGFRD (177 aa). Basic and acidic residues predominate over residues 259–277; the sequence is RDDGLSSKPQREGKQRNSS. A disordered region spans residues 259-290; the sequence is RDDGLSSKPQREGKQRNSSDQEGNSVSSSPAH. Residues 278–288 are compositionally biased toward polar residues; it reads DQEGNSVSSSP. Glycyl lysine isopeptide (Lys-Gly) (interchain with G-Cter in SUMO2) cross-links involve residues Lys-323, Lys-329, Lys-348, Lys-431, Lys-458, Lys-463, and Lys-480. Ser-531 carries the post-translational modification Phosphoserine. The tract at residues 553 to 647 is disordered; that stretch reads ILDNSSTERI…NIPVGPGSTF (95 aa). Lys-567 is covalently cross-linked (Glycyl lysine isopeptide (Lys-Gly) (interchain with G-Cter in SUMO2)). The segment covering 595-607 has biased composition (polar residues); sequence KTVTASHSASPNT. Ser-604 carries the post-translational modification Phosphoserine. Glycyl lysine isopeptide (Lys-Gly) (interchain with G-Cter in SUMO2) cross-links involve residues Lys-610, Lys-651, Lys-782, Lys-788, Lys-814, and Lys-823. Basic residues predominate over residues 610–621; it reads KRGRPRKLRLSK. Residue Ser-848 is modified to Phosphoserine. The segment covering 871–913 has biased composition (polar residues); the sequence is KQSTISPSTSHSVKPQSVTTASRKTKAQNKQTTLSGRTKSSYK. 2 disordered regions span residues 871–946 and 967–987; these read KQST…TSDN and LRQA…GLSK. Ser-921 carries the phosphoserine modification. Residue Lys-925 forms a Glycyl lysine isopeptide (Lys-Gly) (interchain with G-Cter in SUMO2) linkage. Residues 937–946 show a composition bias toward polar residues; the sequence is KNSLSSTSDN. Over residues 969 to 978 the composition is skewed to low complexity; the sequence is QAQQQHLQQQ. Residues Lys-987 and Lys-1088 each participate in a glycyl lysine isopeptide (Lys-Gly) (interchain with G-Cter in SUMO2) cross-link. The disordered stretch occupies residues 1111–1130; it reads LGEEGREGGGVREDEEQLKE. Over residues 1113-1122 the composition is skewed to basic and acidic residues; the sequence is EEGREGGGVR. Glycyl lysine isopeptide (Lys-Gly) (interchain with G-Cter in SUMO2) cross-links involve residues Lys-1136, Lys-1158, Lys-1194, and Lys-1202. Disordered regions lie at residues 1186–1215, 1246–1277, 1297–1323, and 1376–1424; these read QPDL…NPVI, QRQL…TKEL, SQEK…RSPG, and RGEK…DISP. Composition is skewed to low complexity over residues 1248 to 1269 and 1303 to 1315; these read QLSP…YSSP and KSSC…SSTS. Residues Ser-1423 and Ser-1450 each carry the phosphoserine modification. Residues Lys-1454 and Lys-1495 each participate in a glycyl lysine isopeptide (Lys-Gly) (interchain with G-Cter in SUMO2) cross-link. Disordered regions lie at residues 1476-1508, 1722-1746, 1856-1885, 1920-1954, 1964-1983, and 1988-2038; these read AKVA…RSGK, PPVS…SNNV, ISPP…PVGT, IKKE…KALD, SGII…GGDL, and TLRE…AGSK. 3 stretches are compositionally biased toward polar residues: residues 1488 to 1507, 1735 to 1746, and 1859 to 1880; these read LPST…NRSG, PVTTPQISSNNV, and PETQ…STGG. Glycyl lysine isopeptide (Lys-Gly) (interchain with G-Cter in SUMO2) cross-links involve residues Lys-1937 and Lys-1944. Polar residues predominate over residues 1964 to 1976; it reads SGIIASENTSNNS. Glycyl lysine isopeptide (Lys-Gly) (interchain with G-Cter in SUMO2) cross-links involve residues Lys-2060 and Lys-2084. Positions 2087 to 2110 are disordered; that stretch reads LSGNQVKEQQSNSQAEAKKDCEDS. The segment covering 2088-2101 has biased composition (polar residues); sequence SGNQVKEQQSNSQA. Residues Lys-2104, Lys-2152, and Lys-2179 each participate in a glycyl lysine isopeptide (Lys-Gly) (interchain with G-Cter in SUMO2) cross-link. Arg-2206 is modified (omega-N-methylarginine). The segment at 2207-2255 is disordered; sequence GSRHFQGHLLLPREQMKPKQQTKDGRSSAADFTVLDLEDEDEEDEKTDD. Residues 2220–2232 are compositionally biased toward basic and acidic residues; it reads EQMKPKQQTKDGR. Residue Lys-2225 forms a Glycyl lysine isopeptide (Lys-Gly) (interchain with G-Cter in SUMO2) linkage. Acidic residues predominate over residues 2242 to 2255; it reads DLEDEDEEDEKTDD. Residues Lys-2317, Lys-2352, Lys-2396, and Lys-2471 each participate in a glycyl lysine isopeptide (Lys-Gly) (interchain with G-Cter in SUMO2) cross-link. The region spanning 2362 to 2413 is the bHLH domain; sequence YYRRTHTANERRRRGEMRDLFEKLKITLGLLHSSKVSKSLILNRAFSEIQGL. Ser-2480 carries the phosphoserine modification. The tract at residues 2515 to 2534 is disordered; that stretch reads KRDQATENASPSDTPHSSAN. Positions 2520 to 2534 are enriched in polar residues; that stretch reads TENASPSDTPHSSAN. Glycyl lysine isopeptide (Lys-Gly) (interchain with G-Cter in SUMO2) cross-links involve residues Lys-2568 and Lys-2618. The span at 2629–2651 shows a compositional bias: basic and acidic residues; that stretch reads SEASSLKDTERISSRGNHRDSRK. Residues 2629-2654 form a disordered region; that stretch reads SEASSLKDTERISSRGNHRDSRKALG. Lys-2724 is covalently cross-linked (Glycyl lysine isopeptide (Lys-Gly) (interchain with G-Cter in SUMO2)). Ser-2849 and Ser-2860 each carry phosphoserine. The disordered stretch occupies residues 2877–2917; sequence LVSHRKSSDGGQSTSGLPAEPESVSSPPILHMKTGPENSNT. Lys-2979 participates in a covalent cross-link: Glycyl lysine isopeptide (Lys-Gly) (interchain with G-Cter in SUMO2).

As to quaternary structure, component of some MLL1/MLL complex, at least composed of the core components KMT2A/MLL1, ASH2L, HCFC1/HCF1, WDR5 and RBBP5, as well as the facultative components BACC1, CHD8, E2F6, HSP70, INO80C, KANSL1, LAS1L, MAX, MCRS1, MGA, MYST1/MOF, PELP1, PHF20, PRP31, RING2, RUVB1/TIP49A, RUVB2/TIP49B, SENP3, TAF1, TAF4, TAF6, TAF7, TAF9 and TEX10. Interacts with ZMYND11. Interacts with MAX. Requires heterodimerization with MAX for E-box binding. Highly expressed in germ cells and granulosa cells.

It is found in the nucleus. Functionally, functions as a dual-specificity transcription factor, regulating the expression of both MAX-network and T-box family target genes. Functions as a repressor or an activator. Binds to 5'-AATTTCACACCTAGGTGTGAAATT-3' core sequence and seems to regulate MYC-MAX target genes. Suppresses transcriptional activation by MYC and inhibits MYC-dependent cell transformation. Function activated by heterodimerization with MAX. This heterodimerization serves the dual function of both generating an E-box-binding heterodimer and simultaneously blocking interaction of a corepressor. This chain is MAX gene-associated protein, found in Mus musculus (Mouse).